The following is a 471-amino-acid chain: Tryptophanase (471 aa).

N6-acetyllysine occurs at positions 5, 115, and 156. Lys270 carries the post-translational modification N6-(pyridoxal phosphate)lysine. At Lys450 the chain carries N6-acetyllysine.

This sequence belongs to the beta-eliminating lyase family. In terms of assembly, homotetramer. Pyridoxal 5'-phosphate serves as cofactor.

The enzyme catalyses L-tryptophan + H2O = indole + pyruvate + NH4(+). It functions in the pathway amino-acid degradation; L-tryptophan degradation via pyruvate pathway; indole and pyruvate from L-tryptophan: step 1/1. The chain is Tryptophanase from Escherichia coli (strain SMS-3-5 / SECEC).